The following is a 316-amino-acid chain: Type II restriction enzyme BsuBI (316 aa).

This sequence belongs to the BsuBI/PstI type II restriction endonuclease family. Homodimer. Requires Mg(2+) as cofactor.

The catalysed reaction is Endonucleolytic cleavage of DNA to give specific double-stranded fragments with terminal 5'-phosphates.. A P subtype restriction enzyme that recognizes the double-stranded sequence 5'-CTGCAG-3' and cleaves after A-5. The sequence is that of Type II restriction enzyme BsuBI (hsdBR) from Bacillus subtilis.